The primary structure comprises 653 residues: MNAAVVRRTQEALGKVIRRPPLTEKLLNKPPFRYLHDIITEVIRITGFMKGLYTDAEMKSDNVKDKDAKISFLQKAIDVVMMVSGEPLAAKPARIVAGHEPERTNELLQLIGKCCLSKLSSDEAVKRVLAGEKGDSRGRVLRTSKAQEPDNKSVKEEESRTQKEEKRSSEVKERSSSAEHKQKEELKEDSKPREKERDKEKAKEADRDRHREPDRDRNRDGEREKARARAKQDRDRNNKDRDRETERDRDRDRRSDGGKEKERQKDRDRDKGKDRERRKSKNGEHTRDPDREKSRDADKSEKKADISVGASKSSTLKASKRRSKNSLEGRKEDNISAKILDSIVSGLNDEPDQETTAPEIDDNSASLWRENAEPEPAVKQKGDSPSDAEGEAVPTSQDKLEVTENAEVSNELPSSLRRIPRPGSARPAPPRVKRQESTETLAGDRSGSGKTVSTVIIDSQNSDNEDDEQFVVEAAPQLSEIAEIEMVPSGDLEDEEKHGGLVKKILETKKDYEKLQQSPKPGEKERSLIFESAWKKEKDIVSKEIEKLRVSIQTLCKSALPLGKIMDYIQEDVDAMQNELQLWHSENRQHAEALSKEQSITDSAVEPLKAELSELEQQIKDQQDKICAVKANILKNEEKIQKMVHSINLSSRR.

Positions 1 to 306 (MNAAVVRRTQ…ADKSEKKADI (306 aa)) are abolishes microtubules binding when missing. Residues 134–467 (GDSRGRVLRT…DSQNSDNEDD (334 aa)) form a disordered region. Basic and acidic residues-rich tracts occupy residues 145–305 (KAQE…KKAD), 325–335 (NSLEGRKEDNI), and 370–384 (ENAEPEPAVKQKGDS). Residues 229-653 (RAKQDRDRNN…VHSINLSSRR (425 aa)) form a DISC1-interaction domain region. Ser-437 carries the post-translational modification Phosphoserine. Over residues 448-462 (SGKTVSTVIIDSQNS) the composition is skewed to polar residues. Positions 533 to 628 (AWKKEKDIVS…IKDQQDKICA (96 aa)) form a coiled coil.

Belongs to the TRAF3IP1 family. Component of the IFT complex B, at least composed of IFT20, IFT22, IFT25, IFT27, IFT46, IFT52, TRAF3IP1/IFT54, IFT57, IFT74, IFT80, IFT81, and IFT88. Interacts with IFT88. Interacts with IL13RA1. Binds to microtubules, TRAF3 and DISC1. Interacts with MAP4.

Its subcellular location is the cytoplasm. The protein resides in the cytoskeleton. It localises to the cell projection. The protein localises to the cilium. It is found in the cilium axoneme. Its subcellular location is the cilium basal body. In terms of biological role, plays an inhibitory role on IL13 signaling by binding to IL13RA1. Involved in suppression of IL13-induced STAT6 phosphorylation, transcriptional activity and DNA-binding. Recruits TRAF3 and DISC1 to the microtubules. Involved in kidney development and epithelial morphogenesis. Involved in the regulation of microtubule cytoskeleton organization. Is a negative regulator of microtubule stability, acting through the control of MAP4 levels. Involved in ciliogenesis. The chain is TRAF3-interacting protein 1 (Traf3ip1) from Rattus norvegicus (Rat).